Reading from the N-terminus, the 692-residue chain is Elongation factor G (692 aa).

The tr-type G domain occupies Asp8–Ser283. Residues Ala17–Thr24, Asp81–His85, and Asn135–Asp138 contribute to the GTP site.

The protein belongs to the TRAFAC class translation factor GTPase superfamily. Classic translation factor GTPase family. EF-G/EF-2 subfamily.

It is found in the cytoplasm. In terms of biological role, catalyzes the GTP-dependent ribosomal translocation step during translation elongation. During this step, the ribosome changes from the pre-translocational (PRE) to the post-translocational (POST) state as the newly formed A-site-bound peptidyl-tRNA and P-site-bound deacylated tRNA move to the P and E sites, respectively. Catalyzes the coordinated movement of the two tRNA molecules, the mRNA and conformational changes in the ribosome. The protein is Elongation factor G of Magnetococcus marinus (strain ATCC BAA-1437 / JCM 17883 / MC-1).